The chain runs to 525 residues: Nucleolar and spindle-associated protein 1-A (525 aa).

4 disordered regions span residues 46-205 (ESKD…LHEA), 248-292 (EKTP…RFSA), 373-397 (TPES…PEKA), and 451-525 (SLSR…VPVQ). Over residues 58–69 (SSLTDTDELNSS) the composition is skewed to polar residues. The segment covering 82–92 (THRRGRGRKPL) has biased composition (basic residues). Residues 106 to 127 (SVGTGTESLASETDNTQDQNCL) are compositionally biased toward polar residues. Basic and acidic residues predominate over residues 160–169 (TTEKRQKKAS). Residues 270-285 (PPTTGASPSRTPTNQR) show a composition bias toward polar residues. Residues 476 to 494 (CGSNNNVSVLKNNFKQPHL) show a composition bias toward polar residues. The span at 495 to 514 (QTREDRRKQHEQDRKGKRDQ) shows a compositional bias: basic and acidic residues.

Belongs to the NUSAP family. Interacts with DNA. Interacts with microtubules, ipo7, kpna2 and kpnb1. Microtubule stabilization is inhibited by ipo7 and kpna2, while microtubule bundling is inhibited by kpnb1. Active GTP-bound ran causes dissociation of ipo7 and kpnb1.

Its subcellular location is the cytoplasm. The protein resides in the nucleus. It is found in the cytoskeleton. The protein localises to the spindle. Microtubule-associated protein with the capacity to bundle and stabilize microtubules. May associate with chromosomes and promote the organization of meiotic or mitotic spindle microtubules around them. In Xenopus laevis (African clawed frog), this protein is Nucleolar and spindle-associated protein 1-A (nusap1-a).